Consider the following 106-residue polypeptide: Nucleoid-associated protein MCCL_1934 (106 aa).

The disordered stretch occupies residues 1–34; sequence MRGGGNMQQMMKQMQKMQKKMAEEQEKLKEERIE. Positions 7–16 are enriched in low complexity; that stretch reads MQQMMKQMQK. Over residues 20-34 the composition is skewed to basic and acidic residues; sequence KMAEEQEKLKEERIE.

This sequence belongs to the YbaB/EbfC family. As to quaternary structure, homodimer.

Its subcellular location is the cytoplasm. It localises to the nucleoid. Its function is as follows. Binds to DNA and alters its conformation. May be involved in regulation of gene expression, nucleoid organization and DNA protection. In Macrococcus caseolyticus (strain JCSC5402) (Macrococcoides caseolyticum), this protein is Nucleoid-associated protein MCCL_1934.